We begin with the raw amino-acid sequence, 421 residues long: Serine--tRNA ligase (421 aa).

229–231 (TSE) contacts L-serine. Residues 260 to 262 (RKE) and Val276 contribute to the ATP site. An L-serine-binding site is contributed by Glu283. An ATP-binding site is contributed by 347 to 350 (EIVS). Thr383 serves as a coordination point for L-serine.

It belongs to the class-II aminoacyl-tRNA synthetase family. Type-1 seryl-tRNA synthetase subfamily. In terms of assembly, homodimer. The tRNA molecule binds across the dimer.

Its subcellular location is the cytoplasm. It catalyses the reaction tRNA(Ser) + L-serine + ATP = L-seryl-tRNA(Ser) + AMP + diphosphate + H(+). It carries out the reaction tRNA(Sec) + L-serine + ATP = L-seryl-tRNA(Sec) + AMP + diphosphate + H(+). It functions in the pathway aminoacyl-tRNA biosynthesis; selenocysteinyl-tRNA(Sec) biosynthesis; L-seryl-tRNA(Sec) from L-serine and tRNA(Sec): step 1/1. In terms of biological role, catalyzes the attachment of serine to tRNA(Ser). Is also able to aminoacylate tRNA(Sec) with serine, to form the misacylated tRNA L-seryl-tRNA(Sec), which will be further converted into selenocysteinyl-tRNA(Sec). The chain is Serine--tRNA ligase from Nitrosopumilus maritimus (strain SCM1).